A 198-amino-acid chain; its full sequence is Large ribosomal subunit protein bL21 (198 aa).

Belongs to the bacterial ribosomal protein bL21 family. As to quaternary structure, part of the 50S ribosomal subunit. Contacts protein L20.

Functionally, this protein binds to 23S rRNA in the presence of protein L20. The polypeptide is Large ribosomal subunit protein bL21 (Ruegeria sp. (strain TM1040) (Silicibacter sp.)).